The sequence spans 144 residues: Large-conductance mechanosensitive channel (144 aa).

The next 2 membrane-spanning stretches (helical) occupy residues V14–F34 and G81–I101.

This sequence belongs to the MscL family. As to quaternary structure, homopentamer.

The protein resides in the cell inner membrane. In terms of biological role, channel that opens in response to stretch forces in the membrane lipid bilayer. May participate in the regulation of osmotic pressure changes within the cell. This is Large-conductance mechanosensitive channel from Bdellovibrio bacteriovorus (strain ATCC 15356 / DSM 50701 / NCIMB 9529 / HD100).